We begin with the raw amino-acid sequence, 1020 residues long: Nucleotide-binding oligomerization domain-containing protein 2 (1020 aa).

CARD domains follow at residues 6-104 and 106-200; these read CDMC…GSWD and HSLH…AECQ. Positions 43–57 match the ATG16L1-binding motif motif; that stretch reads WDVLSREDYEGLSLP. Positions 219, 232, 233, 282, 283, 284, 285, 286, and 287 each coordinate ADP. A required for CARD9 binding region spans residues 221–254; that stretch reads DGSENLCLEDIYTENILELQTEVGTAGALQKSPA. An NACHT domain is found at 273 to 600; that stretch reads DTILVVGEAG…AAFYLAVSAD (328 aa). Residue Cys375 is the site of S-palmitoyl cysteine attachment. ADP is bound at residue His583. 10 LRR repeats span residues 685–709, 726–749, 766–792, 794–817, 822–845, 850–873, 906–929, 934–962, 963–985, and 1005–1019; these read ARAR…VPGE, LYEM…HLKL, LQHL…QLRP, LGVC…TLVE, CEQL…SMAK, KQNF…VLAQ, HQNL…ALAL, NKSL…LKRN, STLK…ALLQ, and LEEI…ARLL.

This sequence belongs to the NOD1-NOD2 family. As to quaternary structure, homooligomer: homooligomerizes following muramyl dipeptide (MDP)-binding, promoting RIPK2 recruitment. Interacts (via CARD domain) with RIPK2 (via CARD domain). Following RIPK2 recruitment, RIPK2 homooligomerizes via its CARD domain and forms long filaments named RIPosomes. Interacts (via CARD domain) with ubiquitin; inhibiting interaction with RIPK2. Component of a signaling complex consisting of ARHGEF2, NOD2 and RIPK2. Interacts with ANKRD17 (via N-terminus). Interacts with HSPA1A; the interaction enhances NOD2 stability. Interacts (via both CARD domains) with HSP90; the interaction enhances NOD2 stability. Interacts (via CARD domain) with SOCS3; the interaction promotes NOD2 degradation. Interacts (via CARD domain) with ERBIN; the interaction inhibits activation of NOD2. Interacts with MAPKBP1; the interaction is enhanced in the presence of muramyl dipeptide (MDP) and inhibits NOD2 homooligomerization and activation. Interacts with INAVA; the interaction takes place upon Pattern recognition receptor (PRR) stimulation. Interacts (via NACHT domain) with CARD9. Interacts (via CARD domain) with CASP1; this interaction leads to IL1B processing. Also interacts with CASP4. Interacts with NLRP1; this interaction is enhanced in the presence of muramyl dipeptide (MDP) and leads to increased IL1B release. Interacts with NLRP12; this interaction promotes degradation of NOD2 through the ubiquitin-proteasome pathway. Interacts with ANKHD1, C10orf67, CHMP5, DOCK7, ENTR1, KRT15, LDOC1, PPP1R12C, PPP2R3B, TRIM41 and VIM. Interacts with MAVS; interaction takes place following single-stranded RNA (ssRNA)-binding. Interacts with ATG16L1. Interacts with Irgm1; promoting Irgm1 'Lys-63'-linked polyubiquitination, which is required for interactions with the core autophagy factors. Palmitoylated by ZDHHC5; palmitoylation is required for proper recruitment to the bacterial entry site and hence for proper signaling upon cognate peptidoglycan detection. Palmitoylation promotes localization to the cell membrane. Palmitoylation protects from SQSTM1/p62-dependent autophagic degradation. Post-translationally, polyubiquitinated by TRIM27, leading to proteasome-mediated degradation. Polyubiquitinated and degraded following muramyl dipeptide (MDP) stimulation, conferring MDP tolerance and preventing septic shock. In terms of processing, degraded via selective autophagy following interaction with Irgm1. Irgm1 promotes NOD2-RIPK2 RIPosome recruitment to autophagosome membranes, promoting their SQSTM1/p62-dependent autophagic degradation. O-glycosylated by OGT, O-GlcNAcylation increases protein stability. In terms of tissue distribution, expressed in monocytes, macrophages, dendritic cells, hepatocytes, preadipocytes, epithelial cells of oral cavity, lung and intestine. In intestine, highly expressed in ileal Paneth cells of the crypt and in intestinal stem cells. Also expressed in neurons of several brain regions including the hypothalamus.

It is found in the cell membrane. The protein resides in the basolateral cell membrane. It localises to the cytoplasm. Its subcellular location is the mitochondrion. ADP-binding promotes an inactive closed conformation. Pattern recognition receptor (PRR) that detects bacterial peptidoglycan fragments and other danger signals and plays an important role in gastrointestinal immunity. Specifically activated by muramyl dipeptide (MDP), a fragment of bacterial peptidoglycan found in every bacterial peptidoglycan type. NOD2 specifically recognizes and binds 6-O-phospho-MDP, the phosphorylated form of MDP, which is generated by NAGK. 6-O-phospho-MDP-binding triggers oligomerization that facilitates the binding and subsequent activation of the proximal adapter receptor-interacting RIPK2. Following recruitment, RIPK2 undergoes 'Met-1'- (linear) and 'Lys-63'-linked polyubiquitination by E3 ubiquitin-protein ligases XIAP, BIRC2, BIRC3 and the LUBAC complex, becoming a scaffolding protein for downstream effectors, triggering activation of the NF-kappa-B and MAP kinases signaling. This in turn leads to the transcriptional activation of hundreds of genes involved in immune response. Its ability to detect bacterial MDP plays a central role in maintaining the equilibrium between intestinal microbiota and host immune responses to control inflammation. An imbalance in this relationship results in dysbiosis, whereby pathogenic bacteria prevail on commensals, causing damage in the intestinal epithelial barrier as well as allowing bacterial invasion and inflammation. Acts as a regulator of appetite by sensing MDP in a subset of brain neurons: microbiota-derived MDP reach the brain, where they bind and activate NOD2 in inhibitory hypothalamic neurons, decreasing neuronal activity, thereby regulating satiety and body temperature. NOD2-dependent MDP-sensing of bacterial cell walls in the intestinal epithelial compartment contributes to sustained postnatal growth upon undernutrition. Also plays a role in antiviral response by acting as a sensor of single-stranded RNA (ssRNA) from viruses: upon ssRNA-binding, interacts with MAVS, leading to activation of interferon regulatory factor-3/IRF3 and expression of type I interferon. Also acts as a regulator of autophagy in dendritic cells via its interaction with ATG16L1, possibly by recruiting ATG16L1 at the site of bacterial entry. NOD2 activation in the small intestine crypt also contributes to intestinal stem cells survival and function: acts by promoting mitophagy via its association with ATG16L1. In addition to its main role in innate immunity, also regulates the adaptive immune system by acting as regulator of helper T-cell and regulatory T-cells (Tregs). Besides recognizing pathogens, also involved in the endoplasmic reticulum stress response: acts by sensing and binding to the cytosolic metabolite sphingosine-1-phosphate generated in response to endoplasmic reticulum stress, initiating an inflammation process that leads to activation of the NF-kappa-B and MAP kinases signaling. May also be involved in NLRP1 activation following activation by MDP, leading to CASP1 activation and IL1B release in macrophages. The polypeptide is Nucleotide-binding oligomerization domain-containing protein 2 (Mus musculus (Mouse)).